Consider the following 355-residue polypeptide: Histidinol-phosphate aminotransferase (355 aa).

The residue at position 218 (Lys-218) is an N6-(pyridoxal phosphate)lysine.

The protein belongs to the class-II pyridoxal-phosphate-dependent aminotransferase family. Histidinol-phosphate aminotransferase subfamily. In terms of assembly, homodimer. The cofactor is pyridoxal 5'-phosphate.

It carries out the reaction L-histidinol phosphate + 2-oxoglutarate = 3-(imidazol-4-yl)-2-oxopropyl phosphate + L-glutamate. The protein operates within amino-acid biosynthesis; L-histidine biosynthesis; L-histidine from 5-phospho-alpha-D-ribose 1-diphosphate: step 7/9. In Pelodictyon phaeoclathratiforme (strain DSM 5477 / BU-1), this protein is Histidinol-phosphate aminotransferase.